A 2021-amino-acid chain; its full sequence is HEAT repeat-containing protein 5A (2021 aa).

HEAT repeat units lie at residues 795–836 (SQRP…HLAS) and 1059–1096 (VNLS…REAA). 2 disordered regions span residues 1503–1528 (EGNG…LPAD) and 1989–2012 (RGNQ…HGSP). A compositionally biased stretch (polar residues) spans 1512-1522 (VTPTSMGQERG).

It belongs to the HEATR5 family.

This chain is HEAT repeat-containing protein 5A (heatr5a), found in Xenopus tropicalis (Western clawed frog).